The chain runs to 195 residues: uncharacterized protein (195 aa).

The first 20 residues, 1 to 20 (MLKFRLILTVLTVLLITVNG), serve as a signal peptide directing secretion. The segment at 26–195 (IENKSSTSSS…LHNQYPPQQN (170 aa)) is disordered. N-linked (GlcNAc...) asparagine glycosylation occurs at Asn28. 2 stretches are compositionally biased toward low complexity: residues 29–43 (KSST…SKPS) and 74–104 (QSKT…GGNQ). Composition is skewed to polar residues over residues 112 to 123 (DPYQTGSYQGPY) and 151 to 176 (PKNT…NNGP).

As to expression, component of the acid-soluble organic matrix of calcified layers of the shell (at protein level).

The protein resides in the secreted. This is an uncharacterized protein from Lottia gigantea (Giant owl limpet).